Consider the following 66-residue polypeptide: Large ribosomal subunit protein uL30 (66 aa).

The protein belongs to the universal ribosomal protein uL30 family. Part of the 50S ribosomal subunit.

The chain is Large ribosomal subunit protein uL30 from Chloroherpeton thalassium (strain ATCC 35110 / GB-78).